The following is a 156-amino-acid chain: Large ribosomal subunit protein uL11 (156 aa).

The tract at residues 1-20 (MAQSVKTMVEGGKATTGPPI) is disordered.

The protein belongs to the universal ribosomal protein uL11 family. Part of the ribosomal stalk of the 50S ribosomal subunit. Interacts with L10 and the large rRNA to form the base of the stalk. L10 forms an elongated spine to which L12 dimers bind in a sequential fashion forming a multimeric L10(L12)X complex.

Functionally, forms part of the ribosomal stalk which helps the ribosome interact with GTP-bound translation factors. The protein is Large ribosomal subunit protein uL11 of Thermoplasma acidophilum (strain ATCC 25905 / DSM 1728 / JCM 9062 / NBRC 15155 / AMRC-C165).